The sequence spans 417 residues: Serine hydroxymethyltransferase (417 aa).

Residues Leu121 and 125–127 (GHL) each bind (6S)-5,6,7,8-tetrahydrofolate. Position 229 is an N6-(pyridoxal phosphate)lysine (Lys229). 354–356 (SPF) contacts (6S)-5,6,7,8-tetrahydrofolate.

The protein belongs to the SHMT family. As to quaternary structure, homodimer. The cofactor is pyridoxal 5'-phosphate.

It is found in the cytoplasm. The catalysed reaction is (6R)-5,10-methylene-5,6,7,8-tetrahydrofolate + glycine + H2O = (6S)-5,6,7,8-tetrahydrofolate + L-serine. It participates in one-carbon metabolism; tetrahydrofolate interconversion. The protein operates within amino-acid biosynthesis; glycine biosynthesis; glycine from L-serine: step 1/1. Catalyzes the reversible interconversion of serine and glycine with tetrahydrofolate (THF) serving as the one-carbon carrier. This reaction serves as the major source of one-carbon groups required for the biosynthesis of purines, thymidylate, methionine, and other important biomolecules. Also exhibits THF-independent aldolase activity toward beta-hydroxyamino acids, producing glycine and aldehydes, via a retro-aldol mechanism. The polypeptide is Serine hydroxymethyltransferase (Azotobacter vinelandii (strain DJ / ATCC BAA-1303)).